Consider the following 350-residue polypeptide: Beta-hexosaminidase (350 aa).

Residues D73, R81, R148, and 178–179 contribute to the substrate site; that span reads KH. Catalysis depends on H191, which acts as the Proton donor/acceptor. The active-site Nucleophile is the D262.

This sequence belongs to the glycosyl hydrolase 3 family. NagZ subfamily.

It is found in the cytoplasm. The enzyme catalyses Hydrolysis of terminal non-reducing N-acetyl-D-hexosamine residues in N-acetyl-beta-D-hexosaminides.. It participates in cell wall biogenesis; peptidoglycan recycling. In terms of biological role, plays a role in peptidoglycan recycling by cleaving the terminal beta-1,4-linked N-acetylglucosamine (GlcNAc) from peptide-linked peptidoglycan fragments, giving rise to free GlcNAc, anhydro-N-acetylmuramic acid and anhydro-N-acetylmuramic acid-linked peptides. The polypeptide is Beta-hexosaminidase (Bordetella avium (strain 197N)).